The sequence spans 442 residues: F-box/kelch-repeat protein OR23 (442 aa).

The F-box domain occupies 37 to 84 (TLIPGLSNDVGRLILSFVPYPHISRIKSTCKSWYAFLSSKTLISLRHS). Kelch repeat units lie at residues 93-139 (LSHL…NFVA), 145-200 (YVYV…AMPG), 204-257 (RIIV…LVEN), 269-328 (EFWV…KIVA), 330-377 (DCGK…ALNG), and 390-437 (LMDT…TTVM).

The chain is F-box/kelch-repeat protein OR23 (OR23) from Arabidopsis thaliana (Mouse-ear cress).